The following is a 388-amino-acid chain: Succinate--CoA ligase [ADP-forming] subunit beta (388 aa).

Positions 9–244 constitute an ATP-grasp domain; the sequence is KQLFARYGLP…PSQEDPREAQ (236 aa). Residues Lys-46, 53–55, Glu-99, Thr-102, and Glu-107 contribute to the ATP site; that span reads GRG. Residues Asn-199 and Asp-213 each coordinate Mg(2+). Substrate contacts are provided by residues Asn-264 and 321 to 323; that span reads GIV.

This sequence belongs to the succinate/malate CoA ligase beta subunit family. In terms of assembly, heterotetramer of two alpha and two beta subunits. It depends on Mg(2+) as a cofactor.

The enzyme catalyses succinate + ATP + CoA = succinyl-CoA + ADP + phosphate. The catalysed reaction is GTP + succinate + CoA = succinyl-CoA + GDP + phosphate. Its pathway is carbohydrate metabolism; tricarboxylic acid cycle; succinate from succinyl-CoA (ligase route): step 1/1. Its function is as follows. Succinyl-CoA synthetase functions in the citric acid cycle (TCA), coupling the hydrolysis of succinyl-CoA to the synthesis of either ATP or GTP and thus represents the only step of substrate-level phosphorylation in the TCA. The beta subunit provides nucleotide specificity of the enzyme and binds the substrate succinate, while the binding sites for coenzyme A and phosphate are found in the alpha subunit. This Photorhabdus laumondii subsp. laumondii (strain DSM 15139 / CIP 105565 / TT01) (Photorhabdus luminescens subsp. laumondii) protein is Succinate--CoA ligase [ADP-forming] subunit beta.